Reading from the N-terminus, the 383-residue chain is Paralemmin-1 (383 aa).

The residue at position 1 (M1) is an N-acetylmethionine. The stretch at 7–101 (DTVSQQERLQ…EKEIDVLEFG (95 aa)) forms a coiled coil. Disordered stretches follow at residues 51 to 164 (RERW…STMM), 242 to 293 (TLSE…QPGQ), and 333 to 374 (SVTP…DMKK). Residues 69–96 (DMRKQMQEDEQKARSLEESITRLEKEID) show a composition bias toward basic and acidic residues. 3 positions are modified to phosphoserine: S116, S122, and S124. The segment covering 133–143 (ETMVNAQQTPL) has biased composition (polar residues). 3 positions are modified to phosphothreonine: T141, T145, and T153. S157 and S161 each carry phosphoserine. A Phosphothreonine modification is found at T242. S244 is subject to Phosphoserine. Residues 257-273 (GLAEDVTRTTPSRREIT) are compositionally biased toward basic and acidic residues. S345 carries the phosphoserine modification. Over residues 357 to 367 (QTGPTTTPSDT) the composition is skewed to polar residues. 3 positions are modified to phosphothreonine: T361, T362, and T363. At S365 the chain carries Phosphoserine. Position 367 is a phosphothreonine (T367). S-palmitoyl cysteine attachment occurs at residues C377 and C379. A Cysteine methyl ester modification is found at C380. A lipid anchor (S-farnesyl cysteine) is attached at C380. The propeptide at 381–383 (SVM) is removed in mature form.

The protein belongs to the paralemmin family. In terms of assembly, interacts with dopamine receptor DRD3. In terms of tissue distribution, expressed in neurons cells of neuropil-rich areas of the brain, in the Purkinje cells of the cerebellum, in cells of the cerebral cortex, hippocampus, brainstem nuclei and glial processes and sheaths. Expressed in the medulla of the adrenal chromaffin cells and renal duct cells (at protein level).

It localises to the cell membrane. Its subcellular location is the cell projection. The protein localises to the filopodium membrane. The protein resides in the axon. It is found in the dendrite. It localises to the dendritic spine. Its subcellular location is the basolateral cell membrane. The protein localises to the apicolateral cell membrane. In terms of biological role, involved in plasma membrane dynamics and cell process formation. Necessary for axonal and dendritic filopodia induction, for dendritic spine maturation and synapse formation in a palmitoylation-dependent manner. The sequence is that of Paralemmin-1 (Palm) from Rattus norvegicus (Rat).